Reading from the N-terminus, the 339-residue chain is D-erythrose-4-phosphate dehydrogenase (339 aa).

NAD(+)-binding positions include 12–13 (RI) and arginine 81. Substrate is bound by residues 154–156 (SCT), arginine 200, 213–214 (TK), and arginine 236. The active-site Nucleophile is cysteine 155. An NAD(+)-binding site is contributed by asparagine 318.

This sequence belongs to the glyceraldehyde-3-phosphate dehydrogenase family. Epd subfamily. As to quaternary structure, homotetramer.

The protein localises to the cytoplasm. It catalyses the reaction D-erythrose 4-phosphate + NAD(+) + H2O = 4-phospho-D-erythronate + NADH + 2 H(+). The protein operates within cofactor biosynthesis; pyridoxine 5'-phosphate biosynthesis; pyridoxine 5'-phosphate from D-erythrose 4-phosphate: step 1/5. Its function is as follows. Catalyzes the NAD-dependent conversion of D-erythrose 4-phosphate to 4-phosphoerythronate. This chain is D-erythrose-4-phosphate dehydrogenase, found in Escherichia fergusonii (strain ATCC 35469 / DSM 13698 / CCUG 18766 / IAM 14443 / JCM 21226 / LMG 7866 / NBRC 102419 / NCTC 12128 / CDC 0568-73).